The primary structure comprises 221 residues: 7-carboxy-7-deazaguanine synthase (221 aa).

Substrate contacts are provided by residues 12-14 (ING) and R27. Positions 18–216 (KSGQLSVFIR…IQIHKIIWNP (199 aa)) constitute a Radical SAM core domain. C31, C35, and C38 together coordinate [4Fe-4S] cluster. Residue T40 coordinates Mg(2+). T73 is a binding site for substrate. G75 provides a ligand contact to S-adenosyl-L-methionine.

It belongs to the radical SAM superfamily. 7-carboxy-7-deazaguanine synthase family. As to quaternary structure, homodimer. [4Fe-4S] cluster serves as cofactor. The cofactor is S-adenosyl-L-methionine. Mg(2+) is required as a cofactor.

It catalyses the reaction 6-carboxy-5,6,7,8-tetrahydropterin + H(+) = 7-carboxy-7-deazaguanine + NH4(+). Its pathway is purine metabolism; 7-cyano-7-deazaguanine biosynthesis. Functionally, catalyzes the complex heterocyclic radical-mediated conversion of 6-carboxy-5,6,7,8-tetrahydropterin (CPH4) to 7-carboxy-7-deazaguanine (CDG), a step common to the biosynthetic pathways of all 7-deazapurine-containing compounds. The polypeptide is 7-carboxy-7-deazaguanine synthase (Clostridium acetobutylicum (strain ATCC 824 / DSM 792 / JCM 1419 / IAM 19013 / LMG 5710 / NBRC 13948 / NRRL B-527 / VKM B-1787 / 2291 / W)).